Here is a 259-residue protein sequence, read N- to C-terminus: Apolipoprotein A-I (259 aa).

The signal sequence occupies residues methionine 1 to alanine 18. Tandem repeats lie at residues leucine 67–glycine 88 and proline 89–asparagine 110. The 10 X approximate tandem repeats stretch occupies residues leucine 67–alanine 259. The residue at position 109 (methionine 109) is a Methionine sulfoxide. Residues lysine 111 to glutamine 121 form a 3; half-length repeat. Repeat 4 spans residues proline 122 to glutamate 143. The stretch at proline 144–lysine 161 is one 5; truncated repeat. Residues valine 162–glycine 183 form repeat 6. Residues leucine 184–histidine 203 form a 7; truncated repeat. Methionine 189 carries the post-translational modification Methionine sulfoxide. Repeat unit 8 spans residues proline 204–lysine 225. A 9; half-length repeat occupies proline 226 to methionine 236. Methionine 236 carries the methionine sulfoxide modification. Residues proline 237 to alanine 259 form repeat 10.

Belongs to the apolipoprotein A1/A4/E family. Homodimer. Interacts with APOA1BP and CLU. Component of a sperm activating protein complex (SPAP), consisting of APOA1, an immunoglobulin heavy chain, an immunoglobulin light chain and albumin. Interacts with NDRG1. Interacts with SCGB3A2. Interacts with NAXE and YJEFN3. Glycosylated. Post-translationally, palmitoylated. In terms of processing, phosphorylation sites are present in the extracellular medium. As to expression, major protein of plasma HDL, also found in chylomicrons.

The protein resides in the secreted. Its function is as follows. Participates in the reverse transport of cholesterol from tissues to the liver for excretion by promoting cholesterol efflux from tissues and by acting as a cofactor for the lecithin cholesterol acyltransferase (LCAT). As part of the SPAP complex, activates spermatozoa motility. This Rattus norvegicus (Rat) protein is Apolipoprotein A-I (Apoa1).